Here is a 352-residue protein sequence, read N- to C-terminus: UDP-N-acetylglucosamine--N-acetylmuramyl-(pentapeptide) pyrophosphoryl-undecaprenol N-acetylglucosamine transferase (352 aa).

Residues 14–16 (TGG), asparagine 124, arginine 164, serine 185, and glutamine 285 contribute to the UDP-N-acetyl-alpha-D-glucosamine site.

This sequence belongs to the glycosyltransferase 28 family. MurG subfamily.

It is found in the cell inner membrane. The enzyme catalyses di-trans,octa-cis-undecaprenyl diphospho-N-acetyl-alpha-D-muramoyl-L-alanyl-D-glutamyl-meso-2,6-diaminopimeloyl-D-alanyl-D-alanine + UDP-N-acetyl-alpha-D-glucosamine = di-trans,octa-cis-undecaprenyl diphospho-[N-acetyl-alpha-D-glucosaminyl-(1-&gt;4)]-N-acetyl-alpha-D-muramoyl-L-alanyl-D-glutamyl-meso-2,6-diaminopimeloyl-D-alanyl-D-alanine + UDP + H(+). Its pathway is cell wall biogenesis; peptidoglycan biosynthesis. Its function is as follows. Cell wall formation. Catalyzes the transfer of a GlcNAc subunit on undecaprenyl-pyrophosphoryl-MurNAc-pentapeptide (lipid intermediate I) to form undecaprenyl-pyrophosphoryl-MurNAc-(pentapeptide)GlcNAc (lipid intermediate II). This chain is UDP-N-acetylglucosamine--N-acetylmuramyl-(pentapeptide) pyrophosphoryl-undecaprenol N-acetylglucosamine transferase, found in Chlamydia trachomatis serovar A (strain ATCC VR-571B / DSM 19440 / HAR-13).